We begin with the raw amino-acid sequence, 599 residues long: DNA mismatch repair protein MutL (599 aa).

It belongs to the DNA mismatch repair MutL/HexB family.

Functionally, this protein is involved in the repair of mismatches in DNA. It is required for dam-dependent methyl-directed DNA mismatch repair. May act as a 'molecular matchmaker', a protein that promotes the formation of a stable complex between two or more DNA-binding proteins in an ATP-dependent manner without itself being part of a final effector complex. This Rhodopseudomonas palustris (strain BisB18) protein is DNA mismatch repair protein MutL.